Here is a 358-residue protein sequence, read N- to C-terminus: Mitogen-activated protein kinase 1 (358 aa).

N-acetylalanine is present on Ala-2. In terms of domain architecture, Protein kinase spans 23–311 (YTNLSYIGEG…VEQALAHPYL (289 aa)). Ser-27 carries the phosphoserine; by SGK1 modification. ATP is bound by residues 29–37 (IGEGAYGMV) and Lys-52. Asp-147 acts as the Proton acceptor in catalysis. Thr-183 carries the phosphothreonine; by MAP2K1 and MAP2K2 modification. A TXY motif is present at residues 183-185 (TEY). At Tyr-185 the chain carries Phosphotyrosine; by MAP2K1 and MAP2K2. Residue Thr-188 is modified to Phosphothreonine; by autocatalysis. Phosphoserine is present on residues Ser-244, Ser-246, and Ser-282.

This sequence belongs to the protein kinase superfamily. CMGC Ser/Thr protein kinase family. MAP kinase subfamily. In terms of assembly, binds both upstream activators and downstream substrates in multimolecular complexes. This interaction inhibits its tyrosine-kinase activity. Interacts with ADAM15, ARHGEF2, ARRB2, DAPK1 (via death domain), HSF4, IER3, IPO7, NISCH, SGK1, and isoform 1 of NEK2. Interacts (via phosphorylated form) with TPR (via C-terminal region and phosphorylated form); the interaction requires dimerization of MAPK1/ERK2 and increases following EGF stimulation. Interacts with MAP2K1. Interacts with DUSP6. Interacts (phosphorylated form) with CAV2 ('Tyr-19'-phosphorylated form); the interaction, promoted by insulin, leads to nuclear location and MAPK1 activation. Interacts with DCC. Interacts with MORG1. Interacts with PEA15. Interacts with MKNK2. MKNK2 isoform 1 binding prevents from dephosphorylation and inactivation. The phosphorylated form interacts with PML. Interacts with STYX. Interacts with CDK2AP2. Interacts with CAVIN4. Interacts with DUSP7; the interaction enhances DUSP7 phosphatase activity. Interacts with GIT1; this interaction is necessary for MAPK1 localization to focal adhesions. Interacts with ZNF263. Interacts with phosphoglycerate kinase PGK1; the interaction is direct, occurs under hypoxic conditions, and promotes interaction between PGK1 and PIN1. Mg(2+) is required as a cofactor. In terms of processing, dually phosphorylated on Thr-183 and Tyr-185, which activates the enzyme. Ligand-activated ALK induces tyrosine phosphorylation. Dephosphorylated by PTPRJ at Tyr-185. Phosphorylated upon FLT3 and KIT signaling. Dephosphorylated by DUSP1 and DUSP2 at Thr-183 and Tyr-185. Post-translationally, ISGylated. Ubiquitinated by TRIM15 via 'Lys-63'-linked ubiquitination; leading to activation. Deubiquitinated by CYLD. In terms of tissue distribution, widely expressed.

The protein resides in the cytoplasm. It localises to the cytoskeleton. The protein localises to the spindle. Its subcellular location is the nucleus. It is found in the microtubule organizing center. The protein resides in the centrosome. It localises to the membrane. The protein localises to the caveola. Its subcellular location is the cell junction. It is found in the focal adhesion. The catalysed reaction is L-seryl-[protein] + ATP = O-phospho-L-seryl-[protein] + ADP + H(+). It catalyses the reaction L-threonyl-[protein] + ATP = O-phospho-L-threonyl-[protein] + ADP + H(+). Phosphorylated by MAP2K1/MEK1 and MAP2K2/MEK2 on Thr-183 and Tyr-185 in response to external stimuli like insulin or NGF. Both phosphorylations are required for activity. This phosphorylation causes dramatic conformational changes, which enable full activation and interaction of MAPK1/ERK2 with its substrates. Phosphorylation on Ser-27 by SGK1 results in its activation by enhancing its interaction with MAP2K1/MEK1 and MAP2K2/MEK2. Dephosphorylated and inactivated by DUSP1, DUSP3, DUSP6 and DUSP9. Inactivated by pyrimidylpyrrole inhibitors. Serine/threonine kinase which acts as an essential component of the MAP kinase signal transduction pathway. MAPK1/ERK2 and MAPK3/ERK1 are the 2 MAPKs which play an important role in the MAPK/ERK cascade. They participate also in a signaling cascade initiated by activated KIT and KITLG/SCF. Depending on the cellular context, the MAPK/ERK cascade mediates diverse biological functions such as cell growth, adhesion, survival and differentiation through the regulation of transcription, translation, cytoskeletal rearrangements. The MAPK/ERK cascade also plays a role in initiation and regulation of meiosis, mitosis, and postmitotic functions in differentiated cells by phosphorylating a number of transcription factors. About 160 substrates have already been discovered for ERKs. Many of these substrates are localized in the nucleus, and seem to participate in the regulation of transcription upon stimulation. However, other substrates are found in the cytosol as well as in other cellular organelles, and those are responsible for processes such as translation, mitosis and apoptosis. Moreover, the MAPK/ERK cascade is also involved in the regulation of the endosomal dynamics, including lysosome processing and endosome cycling through the perinuclear recycling compartment (PNRC); as well as in the fragmentation of the Golgi apparatus during mitosis. The substrates include transcription factors (such as ATF2, BCL6, ELK1, ERF, FOS, HSF4 or SPZ1), cytoskeletal elements (such as CANX, CTTN, GJA1, MAP2, MAPT, PXN, SORBS3 or STMN1), regulators of apoptosis (such as BAD, BTG2, CASP9, DAPK1, IER3, MCL1 or PPARG), regulators of translation (such as EIF4EBP1 and FXR1) and a variety of other signaling-related molecules (like ARHGEF2, DCC, FRS2 or GRB10). Protein kinases (such as RAF1, RPS6KA1/RSK1, RPS6KA3/RSK2, RPS6KA2/RSK3, RPS6KA6/RSK4, SYK, MKNK1/MNK1, MKNK2/MNK2, RPS6KA5/MSK1, RPS6KA4/MSK2, MAPKAPK3 or MAPKAPK5) and phosphatases (such as DUSP1, DUSP4, DUSP6 or DUSP16) are other substrates which enable the propagation the MAPK/ERK signal to additional cytosolic and nuclear targets, thereby extending the specificity of the cascade. Mediates phosphorylation of TPR in response to EGF stimulation. May play a role in the spindle assembly checkpoint. Phosphorylates PML and promotes its interaction with PIN1, leading to PML degradation. Phosphorylates CDK2AP2. Phosphorylates phosphoglycerate kinase PGK1 under hypoxic conditions to promote its targeting to the mitochondrion and suppress the formation of acetyl-coenzyme A from pyruvate. In terms of biological role, acts as a transcriptional repressor. Binds to a [GC]AAA[GC] consensus sequence. Repress the expression of interferon gamma-induced genes. Seems to bind to the promoter of CCL5, DMP1, IFIH1, IFITM1, IRF7, IRF9, LAMP3, OAS1, OAS2, OAS3 and STAT1. Transcriptional activity is independent of kinase activity. The protein is Mitogen-activated protein kinase 1 of Mus musculus (Mouse).